Reading from the N-terminus, the 295-residue chain is UDP-N-acetylenolpyruvoylglucosamine reductase (295 aa).

Residues 23–188 (KVGGPADFLA…ISAKFALKPG (166 aa)) enclose the FAD-binding PCMH-type domain. Arg-167 is an active-site residue. The Proton donor role is filled by Ser-217. Glu-287 is a catalytic residue.

This sequence belongs to the MurB family. The cofactor is FAD.

The protein localises to the cytoplasm. The enzyme catalyses UDP-N-acetyl-alpha-D-muramate + NADP(+) = UDP-N-acetyl-3-O-(1-carboxyvinyl)-alpha-D-glucosamine + NADPH + H(+). It functions in the pathway cell wall biogenesis; peptidoglycan biosynthesis. In terms of biological role, cell wall formation. The sequence is that of UDP-N-acetylenolpyruvoylglucosamine reductase from Streptococcus pyogenes serotype M12 (strain MGAS9429).